The following is a 320-amino-acid chain: rRNA methyltransferase 2, mitochondrial (320 aa).

The N-terminal 18 residues, 1–18 (MILVYNRIRSIISSSLGR), are a transit peptide targeting the mitochondrion. S-adenosyl-L-methionine contacts are provided by residues 83 to 86 (PGAW), aspartate 104, 178 to 179 (DI), and aspartate 203. Lysine 264 (proton acceptor) is an active-site residue.

This sequence belongs to the class I-like SAM-binding methyltransferase superfamily. RNA methyltransferase RlmE family.

The protein localises to the mitochondrion. It catalyses the reaction uridine(2791) in 21S rRNA + S-adenosyl-L-methionine = 2'-O-methyluridine(2791) in 21S rRNA + S-adenosyl-L-homocysteine + H(+). S-adenosyl-L-methionine-dependent 2'-O-ribose methyltransferase that catalyzes the formation of 2'-O-methyluridine at position 2791 (Um2791) in the 21S mitochondrial large subunit ribosomal RNA (mtLSU rRNA), a universally conserved modification in the peptidyl transferase domain of the mtLSU rRNA. This Saccharomyces cerevisiae (strain ATCC 204508 / S288c) (Baker's yeast) protein is rRNA methyltransferase 2, mitochondrial.